Reading from the N-terminus, the 397-residue chain is Tryptophan synthase beta chain (397 aa).

Lys-91 is subject to N6-(pyridoxal phosphate)lysine.

It belongs to the TrpB family. In terms of assembly, tetramer of two alpha and two beta chains. It depends on pyridoxal 5'-phosphate as a cofactor.

The enzyme catalyses (1S,2R)-1-C-(indol-3-yl)glycerol 3-phosphate + L-serine = D-glyceraldehyde 3-phosphate + L-tryptophan + H2O. It functions in the pathway amino-acid biosynthesis; L-tryptophan biosynthesis; L-tryptophan from chorismate: step 5/5. Its function is as follows. The beta subunit is responsible for the synthesis of L-tryptophan from indole and L-serine. In Bacillus cereus (strain G9842), this protein is Tryptophan synthase beta chain.